Consider the following 506-residue polypeptide: Cytochrome P450 94B3 (506 aa).

The chain crosses the membrane as a helical span at residues 2–22 (AFLLSFLILAFLITIIFFLSS). Heme is bound at residue Cys-447.

Belongs to the cytochrome P450 family. It depends on heme as a cofactor.

It localises to the membrane. It is found in the endoplasmic reticulum membrane. The enzyme catalyses a jasmonyl-L-amino acid + reduced [NADPH--hemoprotein reductase] + O2 = a 12-hydroxyjasmonyl-L-alpha-amino acid + oxidized [NADPH--hemoprotein reductase] + H2O + H(+). It catalyses the reaction L-isoleucine-(+)-7-isojasmonate + NADPH + O2 + H(+) = L-isoleucine-(+)-12-hydroxy-7-isojasmonate + NADP(+) + H2O. It carries out the reaction a jasmonyl-L-isoleucinate + NADPH + O2 + H(+) = L-isoleucine-12-hydroxyjasmonate + NADP(+) + H2O. Functionally, hydroxylase involved in the oxidation of the plant hormone jasmonoyl-L-isoleucine (JA-Ile), a bioactive phytohormone of the jasmonate-mediated signaling pathway. Converts JA-Ile to 12-hydroxy-JA-Ile. Exerts negative feedback control on JA-Ile levels and plays a key role in attenuation of jasmonate responses. Negatively regulates the expression of wound-induced genes TIFY11A/JAZ5, TIFY5A/JAZ8 and TIFY5A/JAZ10. Catalyzes the hydroxylation of jasmonoyl-L-valine (JA-Val), jasmonoyl-L-leucine (JA-Leu) and jasmonoyl-L-phenylalanine (JA-Phe) in vitro. Converts JA-Val, JA-Leu and JA-Phe to 12-hydroxy-JA-Val, 12-hydroxy-JA-Leu and 12-hydroxy-JA-Phe, respectively. This is Cytochrome P450 94B3 from Arabidopsis thaliana (Mouse-ear cress).